Reading from the N-terminus, the 1076-residue chain is ESX secretion system protein YueB (1076 aa).

Residues 9-29 (IKLISAVIIILLLPVLFFRFI) traverse the membrane as a helical segment. 2 disordered regions span residues 372–404 (RLSLLKPKESDEKEDGEDTSDNKDDTDKEDIED) and 423–552 (IKDI…ETDI). A compositionally biased stretch (basic and acidic residues) spans 423–439 (IKDISEGLKEPEQEKPT). 2 stretches are compositionally biased toward polar residues: residues 449–495 (DDSP…NIET) and 503–522 (SKNVPEQDTNTENTGTSKTD). The stretch at 552–622 (ISGAKKRLNE…TKKLVDFDNN (71 aa)) forms a coiled coil. 5 helical membrane passes run 904–924 (TVPPVVILVIVLISSLLIGYF), 938–958 (ALFGILNILVGLMISLFGLNI), 964–984 (DQTIKWSVFTILLLVASSAFI), 995–1015 (GWVASAAMILFYVAPLIDLIM), and 1040–1060 (TMGITVLLIITVIAVALPLII).

The protein belongs to the EsaA family.

It localises to the cell membrane. Functionally, required for YukE secretion. Probable component or regulator of the ESX/ESAT-6-like secretion system (BsEss). Bacteriophage SPP1 receptor. Essential for the irreversible adsorption of the bacteriophage. The polypeptide is ESX secretion system protein YueB (yueB) (Bacillus subtilis (strain 168)).